A 95-amino-acid chain; its full sequence is Mitochondrial import inner membrane translocase subunit Tim13 (95 aa).

Met1 carries the post-translational modification N-acetylmethionine. Ser7 is modified (phosphoserine). Positions 46-69 (CFRKCIGKPGGSLDNSEQKCIAMC) match the Twin CX3C motif motif. Disulfide bonds link Cys46–Cys69 and Cys50–Cys65. Lys53 is modified (N6-succinyllysine).

It belongs to the small Tim family. In terms of assembly, heterohexamer; composed of 3 copies of TIMM8 (TIMM8A or TIMM8B) and 3 copies of TIMM13, named soluble 70 kDa complex. Associates with the TIM22 complex, whose core is composed of TIMM22. As to expression, present at high level in liver and brain, and at lower level in muscle and heart. In CNS sections, it is predominantly present in the soma and the dendritic portion of the Purkinje cells of the cerebellum, but not in the glial cells. Scattered expression also is also detected in the brain stem, olfactory bulb, substantia nigra, hippocampus and striatum (at protein level).

It localises to the mitochondrion inner membrane. In terms of biological role, mitochondrial intermembrane chaperone that participates in the import and insertion of some multi-pass transmembrane proteins into the mitochondrial inner membrane. Also required for the transfer of beta-barrel precursors from the TOM complex to the sorting and assembly machinery (SAM complex) of the outer membrane. Acts as a chaperone-like protein that protects the hydrophobic precursors from aggregation and guide them through the mitochondrial intermembrane space. The TIMM8-TIMM13 complex mediates the import of proteins such as TIMM23, SLC25A12/ARALAR1 and SLC25A13/ARALAR2, while the predominant TIMM9-TIMM10 70 kDa complex mediates the import of much more proteins. The protein is Mitochondrial import inner membrane translocase subunit Tim13 (Timm13) of Mus musculus (Mouse).